The sequence spans 463 residues: tRNA-2-methylthio-N(6)-dimethylallyladenosine synthase (463 aa).

One can recognise an MTTase N-terminal domain in the interval 5–125 (RKLHIKSYGC…LPQLLAKAEQ (121 aa)). C14, C50, C88, C166, C170, and C173 together coordinate [4Fe-4S] cluster. In terms of domain architecture, Radical SAM core spans 152–384 (RARGISAFVT…QQLIDQQQSA (233 aa)). The TRAM domain occupies 387–449 (KAAIGRTVEV…RYSLLGELAS (63 aa)).

This sequence belongs to the methylthiotransferase family. MiaB subfamily. As to quaternary structure, monomer. [4Fe-4S] cluster is required as a cofactor.

It localises to the cytoplasm. The catalysed reaction is N(6)-dimethylallyladenosine(37) in tRNA + (sulfur carrier)-SH + AH2 + 2 S-adenosyl-L-methionine = 2-methylsulfanyl-N(6)-dimethylallyladenosine(37) in tRNA + (sulfur carrier)-H + 5'-deoxyadenosine + L-methionine + A + S-adenosyl-L-homocysteine + 2 H(+). Functionally, catalyzes the methylthiolation of N6-(dimethylallyl)adenosine (i(6)A), leading to the formation of 2-methylthio-N6-(dimethylallyl)adenosine (ms(2)i(6)A) at position 37 in tRNAs that read codons beginning with uridine. This is tRNA-2-methylthio-N(6)-dimethylallyladenosine synthase from Rhodopseudomonas palustris (strain TIE-1).